The primary structure comprises 536 residues: Glucose-6-phosphate isomerase (536 aa).

Glu-345 (proton donor) is an active-site residue. Catalysis depends on residues His-376 and Lys-505.

It belongs to the GPI family.

The protein localises to the cytoplasm. The catalysed reaction is alpha-D-glucose 6-phosphate = beta-D-fructose 6-phosphate. It participates in carbohydrate biosynthesis; gluconeogenesis. The protein operates within carbohydrate degradation; glycolysis; D-glyceraldehyde 3-phosphate and glycerone phosphate from D-glucose: step 2/4. Catalyzes the reversible isomerization of glucose-6-phosphate to fructose-6-phosphate. The chain is Glucose-6-phosphate isomerase from Ruegeria sp. (strain TM1040) (Silicibacter sp.).